The chain runs to 441 residues: Cytochrome c biogenesis protein Ccs1 (441 aa).

A run of 3 helical transmembrane segments spans residues 19 to 39, 78 to 98, and 164 to 184; these read LKLA…GTVI, TWWF…CTLA, and IGPI…LLGN.

This sequence belongs to the Ccs1/CcsB family. In terms of assembly, may interact with CcsA.

It localises to the plastid. The protein resides in the chloroplast thylakoid membrane. Required during biogenesis of c-type cytochromes (cytochrome c6 and cytochrome f) at the step of heme attachment. In Rhodomonas salina (Cryptomonas salina), this protein is Cytochrome c biogenesis protein Ccs1.